Here is a 187-residue protein sequence, read N- to C-terminus: Large ribosomal subunit protein uL5 (187 aa).

The protein belongs to the universal ribosomal protein uL5 family. Part of the 50S ribosomal subunit; part of the 5S rRNA/L5/L18/L25 subcomplex. Contacts the 5S rRNA and the P site tRNA. Forms a bridge to the 30S subunit in the 70S ribosome.

This is one of the proteins that bind and probably mediate the attachment of the 5S RNA into the large ribosomal subunit, where it forms part of the central protuberance. In the 70S ribosome it contacts protein S13 of the 30S subunit (bridge B1b), connecting the 2 subunits; this bridge is implicated in subunit movement. Contacts the P site tRNA; the 5S rRNA and some of its associated proteins might help stabilize positioning of ribosome-bound tRNAs. The sequence is that of Large ribosomal subunit protein uL5 from Nocardia farcinica (strain IFM 10152).